Here is a 316-residue protein sequence, read N- to C-terminus: Probable 5-dehydro-4-deoxyglucarate dehydratase 1 (316 aa).

It belongs to the DapA family.

The catalysed reaction is 5-dehydro-4-deoxy-D-glucarate + H(+) = 2,5-dioxopentanoate + CO2 + H2O. The protein operates within carbohydrate acid metabolism; D-glucarate degradation; 2,5-dioxopentanoate from D-glucarate: step 2/2. The chain is Probable 5-dehydro-4-deoxyglucarate dehydratase 1 from Streptomyces coelicolor (strain ATCC BAA-471 / A3(2) / M145).